We begin with the raw amino-acid sequence, 237 residues long: MQRKIKSYVLRAGRISNRQQQGLDLWLEDYELKFDSPTPWNFAKEFGRHDADTIVEIGFGMGTSLFAMAMNNPQCNYLGIEVHKAGVGSLVADLHEHQISNVRVVVHDAVEVLQTKIPENSLAGVQIFFPDPWHKKRHHKRRLIQSEFIQMLVKKIRPSGFIHCATDWEDYAEHILNVLSSESALFNQQKEGGYSPRPDSRPLTKFEQRGERLGHGVWDLVFIKNKEVTNDKACNSY.

E56, E81, D108, and D131 together coordinate S-adenosyl-L-methionine. The active site involves D131. Substrate contacts are provided by residues K135, D167, and 204–207; that span reads TKFE.

This sequence belongs to the class I-like SAM-binding methyltransferase superfamily. TrmB family.

The catalysed reaction is guanosine(46) in tRNA + S-adenosyl-L-methionine = N(7)-methylguanosine(46) in tRNA + S-adenosyl-L-homocysteine. It participates in tRNA modification; N(7)-methylguanine-tRNA biosynthesis. Its function is as follows. Catalyzes the formation of N(7)-methylguanine at position 46 (m7G46) in tRNA. The sequence is that of tRNA (guanine-N(7)-)-methyltransferase from Legionella pneumophila (strain Paris).